The sequence spans 449 residues: Mitochondrial distribution and morphology protein 10 (449 aa).

2 disordered regions span residues 215 to 244 (GPSEPVEDSEKSTAAPTKTRSGVKRIDEED) and 282 to 307 (DATPPSFQLPSSSPTQPSLLAHGAPS). Low complexity predominate over residues 285 to 301 (PPSFQLPSSSPTQPSLL).

Belongs to the MDM10 family. Component of the ER-mitochondria encounter structure (ERMES) or MDM complex, composed of MMM1, MDM10, MDM12 and MDM34. Associates with the mitochondrial outer membrane sorting assembly machinery SAM(core) complex.

It localises to the mitochondrion outer membrane. In terms of biological role, component of the ERMES/MDM complex, which serves as a molecular tether to connect the endoplasmic reticulum and mitochondria. Components of this complex are involved in the control of mitochondrial shape and protein biogenesis and may function in phospholipid exchange. MDM10 is involved in the late assembly steps of the general translocase of the mitochondrial outer membrane (TOM complex). Functions in the TOM40-specific route of the assembly of outer membrane beta-barrel proteins, including the association of TOM40 with the receptor TOM22 and small TOM proteins. Can associate with the SAM(core) complex as well as the MDM12-MMM1 complex, both involved in late steps of the major beta-barrel assembly pathway, that is responsible for biogenesis of all outer membrane beta-barrel proteins. May act as a switch that shuttles between both complexes and channels precursor proteins into the TOM40-specific pathway. Plays a role in mitochondrial morphology and in the inheritance of mitochondria. The sequence is that of Mitochondrial distribution and morphology protein 10 from Postia placenta (strain ATCC 44394 / Madison 698-R) (Brown rot fungus).